A 176-amino-acid chain; its full sequence is Zinc finger A20 and AN1 domain-containing stress-associated protein 9 (176 aa).

The A20-type zinc finger occupies 16–50; the sequence is ASEPKLCVKGCGFFGSPSNMDLCSKCYRGICAEEA. Residues cysteine 22, cysteine 26, cysteine 38, cysteine 41, cysteine 117, cysteine 120, cysteine 131, cysteine 133, cysteine 138, histidine 141, histidine 147, and cysteine 149 each contribute to the Zn(2+) site. An AN1-type zinc finger spans residues 111–157; that stretch reads PARTNRCLCCNKKVGIMGFKCKCGSTFCGEHRYPETHDCSFDFKEVG.

In terms of biological role, may be involved in environmental stress response. The protein is Zinc finger A20 and AN1 domain-containing stress-associated protein 9 (SAP9) of Arabidopsis thaliana (Mouse-ear cress).